The primary structure comprises 360 residues: MADSESKIYHERQRLQFCLLHCLNNLFQDKDAFTKESLNSIAEKLETNDPNKETWTPLSFVLKPHHNTITGNYDVNVMITALEGKGKSVVWHDKRIGASSIDLDDADTLMGIVLNVPVKRYGGLWRSRHWVVVRKINGVWYNLDSDLVVPQLFRDDDEVRGFLDQNLSLDVIGLIWNLPYNANQLPLASNYRVVITHWSDLNGMFSHVTNYPLDFDVYPQVSSKVSAIYKATGTKRFNANTRPVTPGKQSSVKGPYYKNPGCTTSCGLRLPRKTECTAARLIKDLSCKFVMGLRLVVMRKKKKKRSPPLKKASSSGISQPSVISVVNDNNHRSAAIEDCIQFINSSSSFTRSNSTCGSKS.

A Josephin domain is found at 5–192 (ESKIYHERQR…NQLPLASNYR (188 aa)). Residue Cys18 is the Nucleophile of the active site. The Proton acceptor role is filled by His129.

The catalysed reaction is Thiol-dependent hydrolysis of ester, thioester, amide, peptide and isopeptide bonds formed by the C-terminal Gly of ubiquitin (a 76-residue protein attached to proteins as an intracellular targeting signal).. In terms of biological role, may act as a deubiquitinating enzyme. This chain is Josephin-like protein, found in Arabidopsis thaliana (Mouse-ear cress).